We begin with the raw amino-acid sequence, 329 residues long: MSKPALRVAVTGAAGQIGYALLFRIASGEMLGKDQPVILQLLEIPDEKAQKALKGVIMELEDCAFPLLHEVTAHSDPRTAFKDADVALLVGARPRGPGMERKDLLSVNAQIFTAQGRALNDVASRNVKVLVVGNPANTNAYIAMKSAPDLPAKNFTAMLRLDHNRALSQLSAKSGKRVADIEKLIVWGNHSPTMYPDFRFATVGGQGLTQLINDDAWNRDTFIPTVGKRGAAIIEARGLSSAASAANAAIDHVRDWVLGSNGKWVTMGIPSDGSYGIPEGIIYGFPVVTENGEYKMIKDLEIDAFSRERLDFTLKELLEERDGVKDLLK.

Residue 12-18 coordinates NAD(+); that stretch reads GAAGQIG. Arginine 95 and arginine 101 together coordinate substrate. NAD(+) contacts are provided by residues asparagine 108, glutamine 115, and 132–134; that span reads VGN. Residues asparagine 134 and arginine 165 each coordinate substrate. Residue histidine 190 is the Proton acceptor of the active site.

It belongs to the LDH/MDH superfamily. MDH type 2 family.

The catalysed reaction is (S)-malate + NAD(+) = oxaloacetate + NADH + H(+). Catalyzes the reversible oxidation of malate to oxaloacetate. The chain is Malate dehydrogenase from Bordetella bronchiseptica (strain ATCC BAA-588 / NCTC 13252 / RB50) (Alcaligenes bronchisepticus).